Consider the following 171-residue polypeptide: MLFNKIISLAATLATASALPFAPAPRSISGGVTLINNLSQDLYLWSVSGTASPMVTLPAGQSYQETWQINPTGGGISIKIGCSEDGSDVLQYEYTKVGDLLFWDMSSIDLSSGSPLVAAGFDVSIDDSSCDTVTCAPGDVNCSESYQYPDDHNTRACSSSAAYTLTLGTAN.

A signal peptide spans M1 to A18. N-linked (GlcNAc...) asparagine glycosylation is found at N37 and N141. Intrachain disulfides connect C130–C157 and C135–C142.

It belongs to the thaumatin family.

The protein localises to the secreted. Its subcellular location is the extracellular space. The protein resides in the extracellular matrix. It localises to the cell wall. Functionally, secreted thaumatin-like protein that, with cetA, plays an essential role in early conidial germination with a possible role in cell wall remodeling. The protein is Secreted thaumatin-like protein calA of Emericella nidulans (strain FGSC A4 / ATCC 38163 / CBS 112.46 / NRRL 194 / M139) (Aspergillus nidulans).